Reading from the N-terminus, the 555-residue chain is MHAPVLVLSDSLKRESGSKVHHGNIQASKAVADIIRTTLGPRSMLKMLLDAGGGIVVTNDGNAILRELDVAHPAAKSMIELSRTQDEEVGDGTTSVIVLAGEMLHVAEAFLEKNYHPTVICRAYIKALEDSIAVLDKIAMSIDINDRSQVLGLVKSCIGTKFTSQFGDLIADLAIDATTTVGVDLGQGLREVDIKKYIKVEKVPGGQFEDSEVLKGVMFNKDVVAPGKMKRKIVNPRIILLDCPLEYKKGENQTNAELVREEDWEVLLKLEEEYIENICVQILKFKPDLVITEKGLSDLACHYFSKAGVSAIRRLRKTDNNRIAKACGAVIVNRPDELQESDIGTGAGLFEVKKIGDDFFSFIVDCKEPKACTVLLRGPSKDFINEVERNLQDAMSVARNIIKNPKLVPGGGATELTVSATLKQKSATIEGIEKWPYEAAAIAFEAIPRTLAQNCGVNVIRTMTALQGKHANGENAWTGIDGNTGAIADMKESKIWDSYNVKAQTFKTAIEAACMLLRIDDIVSGIKKKQAPGSGPSKPTIETEGDADNEQILPD.

The interval 527 to 555 is disordered; sequence KKKQAPGSGPSKPTIETEGDADNEQILPD.

Belongs to the TCP-1 chaperonin family. As to quaternary structure, heterooligomeric complex of about 850 to 900 kDa that forms two stacked rings, 12 to 16 nm in diameter. Interacts with CCT8.

It is found in the cytoplasm. Its function is as follows. Molecular chaperone; assists the folding of proteins upon ATP hydrolysis. Known to play a role, in vitro, in the folding of actin and tubulin. In Arabidopsis thaliana (Mouse-ear cress), this protein is T-complex protein 1 subunit gamma.